The following is a 326-amino-acid chain: Probable protein phosphatase 2C 61 (326 aa).

The 275-residue stretch at L42–L316 folds into the PPM-type phosphatase domain. The Mn(2+) site is built by D77, G78, D261, and D307.

Belongs to the PP2C family. The cofactor is Mg(2+). Requires Mn(2+) as cofactor.

It carries out the reaction O-phospho-L-seryl-[protein] + H2O = L-seryl-[protein] + phosphate. The enzyme catalyses O-phospho-L-threonyl-[protein] + H2O = L-threonyl-[protein] + phosphate. The chain is Probable protein phosphatase 2C 61 from Arabidopsis thaliana (Mouse-ear cress).